A 793-amino-acid chain; its full sequence is Protein smoothened (793 aa).

The first 30 residues, 1 to 30 (MAAGRPVRGPELAPRRLLQLLLLVLLGGRG), serve as a signal peptide directing secretion. Over 31-237 (RGAALSGNVT…EAEHQDMHSY (207 aa)) the chain is Extracellular. Residues 35–61 (LSGNVTGPGPRSAGGSARRNAPVTSPP) form a disordered region. An N-linked (GlcNAc...) asparagine glycan is attached at Asn-38. 5 cysteine pairs are disulfide-bonded: Cys-68/Cys-182, Cys-74/Cys-138, Cys-82/Cys-131, Cys-122/Cys-158, and Cys-151/Cys-173. One can recognise an FZ domain in the interval 69–185 (GRAAHCEPLR…DHFPEGCPNE (117 aa)). Asp-99 is a binding site for cholesterol. Asn-192 carries N-linked (GlcNAc...) asparagine glycosylation. Cystine bridges form between Cys-197–Cys-217, Cys-221–Cys-299, and Cys-318–Cys-394. A helical transmembrane segment spans residues 238-258 (IAAFGAVTGLCTLFTLATFVA). The Cytoplasmic segment spans residues 259–266 (DWRNSNRY). A helical transmembrane segment spans residues 267–287 (PAVILFYVNACFFVGSIGWLA). Residues 288–318 (QFMDGARREIVCRADGTMRFGEPTSSETLSC) are Extracellular-facing. Residues 319–339 (VIIFVIVYYALMAGVVWFVVL) traverse the membrane as a helical segment. Residues 340–362 (TYAWHTSFKALGTTYQPLSGKTS) are Cytoplasmic-facing. Residues 363-383 (YFHLLTWSLPFVLTVAILAVA) form a helical membrane-spanning segment. Topologically, residues 384–406 (QVDGDSVSGICFVGYKNYRYRAG) are extracellular. Residue Tyr-398 participates in cholesterol binding. The chain crosses the membrane as a helical span at residues 407–427 (FVLAPIGLVLIVGGYFLIRGV). Topologically, residues 428 to 455 (MTLFSIKSNHPGLLSEKAASKINETMLR) are cytoplasmic. Residues 456-476 (LGIFGFLAFGFVLITFSCHFY) traverse the membrane as a helical segment. At 477–528 (DFFNQAEWERSFRDYVLCQANVTIGLPTKKPIPDCEIKNRPSLLVEKINLFA) the chain is on the extracellular side. The cysteines at positions 494 and 511 are disulfide-linked. N-linked (GlcNAc...) asparagine glycosylation is present at Asn-497. The helical transmembrane segment at 529-549 (MFGTGIAMSTWVWTKATLLIW) threads the bilayer. The interaction with BBS5 and BBS7 stretch occupies residues 542–573 (TKATLLIWRRTWCRLTGHSDDEPKRIKKSKMI). Over 550–793 (RRTWCRLTGH…AELLDADSDF (244 aa)) the chain is Cytoplasmic. Ser-560, Ser-578, and Ser-594 each carry phosphoserine. Residues 574 to 657 (AKAFSKRREL…TPVPPEEQAN (84 aa)) form a required for interaction with PRKACA region. Residues 585 to 597 (QNPGQELSFSMHT) are interaction with DLG5. Phosphothreonine is present on Thr-597. A phosphoserine mark is found at Ser-599 and Ser-642. Phosphothreonine occurs at positions 644 and 648. At Ser-666 the chain carries Phosphoserine. Positions 674–684 (GRKKKRRKRKK) are enriched in basic residues. The interval 674-702 (GRKKKRRKRKKEVCPLGPAPELHHSAPVP) is disordered.

The protein belongs to the G-protein coupled receptor Fz/Smo family. In terms of assembly, homodimer. Interacts (via C-terminus) with protein kinase A catalytic subunit PRKACA; interacts with free PRKACA subunits and the interaction leads to sequestration of PRKACA at the membrane, preventing PRKACA-mediated phosphorylation of GLI transcription factors. Interacts with ARRB2. Interacts with KIF7. Interacts with BBS5 and BBS7; the interactions are indicative for the association of SMO with the BBsome complex to facilitate ciliary localization of SMO. Interacts with DLG5 and SDCBP. Interacts with GAS8/DRC4. In terms of processing, phosphorylation by GRK kinases is required for interaction with protein kinase A catalytic subunit PRKACA. In terms of tissue distribution, in embryo, found in the early neural folds and neural tube, pre-somitic mesoderm and somites, developing limb bud, gut, eye, testes, cartilage, muscle, lung, epiglottis, thymus, tongue, jaw, taste buds, teeth, and skin. In adult, found in multiple tissues including heart, brain, liver, lung, skeletal muscle, kidney and testis.

It localises to the cell membrane. The protein resides in the cell projection. The protein localises to the cilium. Its function is as follows. G protein-coupled receptor which associates with the patched protein (PTCH) to transduce hedgehog protein signaling. Binding of sonic hedgehog (SHH) to its receptor patched prevents inhibition of smoothened (SMO) by patched. When active, SMO binds to and sequesters protein kinase A catalytic subunit PRKACA at the cell membrane, preventing PRKACA-mediated phosphorylation of GLI transcription factors which releases the GLI proteins from PRKACA-mediated inhibition and allows for transcriptional activation of hedgehog pathway target genes. Required for the accumulation of KIF7, GLI2 and GLI3 in the cilia. Interacts with DLG5 at the ciliary base to induce the accumulation of KIF7 and GLI2 at the ciliary tip for GLI2 activation. The protein is Protein smoothened (Smo) of Rattus norvegicus (Rat).